Here is a 596-residue protein sequence, read N- to C-terminus: Elongation factor 4 (596 aa).

The 183-residue stretch at 2–184 (KHIRNFSIIA…VIVEQIPPPE (183 aa)) folds into the tr-type G domain. GTP contacts are provided by residues 14–19 (DHGKST) and 131–134 (NKID).

Belongs to the TRAFAC class translation factor GTPase superfamily. Classic translation factor GTPase family. LepA subfamily.

Its subcellular location is the cell inner membrane. It catalyses the reaction GTP + H2O = GDP + phosphate + H(+). Functionally, required for accurate and efficient protein synthesis under certain stress conditions. May act as a fidelity factor of the translation reaction, by catalyzing a one-codon backward translocation of tRNAs on improperly translocated ribosomes. Back-translocation proceeds from a post-translocation (POST) complex to a pre-translocation (PRE) complex, thus giving elongation factor G a second chance to translocate the tRNAs correctly. Binds to ribosomes in a GTP-dependent manner. This is Elongation factor 4 from Shewanella piezotolerans (strain WP3 / JCM 13877).